A 124-amino-acid polypeptide reads, in one-letter code: Ribonuclease pancreatic (124 aa).

Residues 1–21 (AESSAMKFQRQHMDSDGHPDT) are disordered. Substrate is bound by residues lysine 7 and arginine 10. Histidine 12 acts as the Proton acceptor in catalysis. 4 cysteine pairs are disulfide-bonded: cysteine 26–cysteine 84, cysteine 40–cysteine 95, cysteine 58–cysteine 110, and cysteine 65–cysteine 72. Residues 41-45 (KPVNT), lysine 66, and arginine 85 contribute to the substrate site. Histidine 119 functions as the Proton donor in the catalytic mechanism.

The protein belongs to the pancreatic ribonuclease family. Monomer. Interacts with and forms tight 1:1 complexes with RNH1. Dimerization of two such complexes may occur. Interaction with RNH1 inhibits this protein. As to expression, pancreas.

It is found in the secreted. It carries out the reaction an [RNA] containing cytidine + H2O = an [RNA]-3'-cytidine-3'-phosphate + a 5'-hydroxy-ribonucleotide-3'-[RNA].. The catalysed reaction is an [RNA] containing uridine + H2O = an [RNA]-3'-uridine-3'-phosphate + a 5'-hydroxy-ribonucleotide-3'-[RNA].. Its function is as follows. Endonuclease that catalyzes the cleavage of RNA on the 3' side of pyrimidine nucleotides. Acts on single-stranded and double-stranded RNA. The polypeptide is Ribonuclease pancreatic (RNASE1) (Galea musteloides (Common yellow-toothed cavy)).